The primary structure comprises 576 residues: Sulfite reductase [NADPH] hemoprotein beta-component (576 aa).

[4Fe-4S] cluster is bound by residues Cys-435, Cys-441, Cys-480, and Cys-484. Cys-484 contributes to the siroheme binding site.

It belongs to the nitrite and sulfite reductase 4Fe-4S domain family. Alpha(8)-beta(8). The alpha component is a flavoprotein, the beta component is a hemoprotein. Requires siroheme as cofactor. The cofactor is [4Fe-4S] cluster.

The catalysed reaction is hydrogen sulfide + 3 NADP(+) + 3 H2O = sulfite + 3 NADPH + 4 H(+). Its pathway is sulfur metabolism; hydrogen sulfide biosynthesis; hydrogen sulfide from sulfite (NADPH route): step 1/1. Its function is as follows. Component of the sulfite reductase complex that catalyzes the 6-electron reduction of sulfite to sulfide. This is one of several activities required for the biosynthesis of L-cysteine from sulfate. The polypeptide is Sulfite reductase [NADPH] hemoprotein beta-component (Yersinia pseudotuberculosis serotype IB (strain PB1/+)).